A 1142-amino-acid chain; its full sequence is GPI inositol-deacylase (1142 aa).

Residues 24-59 are disordered; that stretch reads GFYKRNNANTASNDEKPNLEQNDIPSVTSSGSSTPS. The segment covering 47 to 59 has biased composition (low complexity); sequence IPSVTSSGSSTPS. A helical membrane pass occupies residues 81–101; the sequence is SWSLYVAIIAILLLLVILHSF. Ser264 is an active-site residue. Residues Asn596 and Asn679 are each glycosylated (N-linked (GlcNAc...) asparagine). 4 helical membrane passes run 741-761, 781-801, 849-869, and 946-966; these read LLASFPVVVISLAAYNQFRYF, GLIKLLFLVSILSIAFSYLIS, LLTLMFVGLVITASVIILCVM, and IIGIMLLLLMAMTVVPFQLVY. Asn1002 carries an N-linked (GlcNAc...) asparagine glycan. The chain crosses the membrane as a helical span at residues 1006–1026; the sequence is TITILMLLLAPLDFPVLIVWA. N-linked (GlcNAc...) asparagine glycosylation occurs at Asn1028. Transmembrane regions (helical) follow at residues 1035 to 1055, 1075 to 1095, and 1097 to 1117; these read IPFPTHHNFFSIIPFILLTEI, VFLFLLSFYSLIYGAEKPYLI, and NVVGLYFFWLLFLYAKNGFFV. N-linked (GlcNAc...) asparagine glycosylation occurs at Asn1119.

The protein belongs to the GPI inositol-deacylase family.

It localises to the endoplasmic reticulum membrane. Involved in inositol deacylation of GPI-anchored proteins which plays important roles in the quality control and ER-associated degradation of GPI-anchored proteins. This chain is GPI inositol-deacylase (bst1), found in Schizosaccharomyces pombe (strain 972 / ATCC 24843) (Fission yeast).